The chain runs to 325 residues: Exogastrula-inducing polypeptide (325 aa).

Positions Met-1–Ala-19 are cleaved as a signal peptide. The propeptide occupies Glu-20–Gly-45. 2 EGF-like domains span residues Thr-48–Tyr-91 and Thr-107–Ser-154. Cystine bridges form between Cys-52/Cys-65, Cys-59/Cys-75, Cys-77/Cys-90, Cys-111/Cys-124, Cys-118/Cys-138, and Cys-140/Cys-153. The propeptide occupies Glu-160–Ala-177. One can recognise an EGF-like 3 domain in the interval Ser-180–Ser-226. Cystine bridges form between Cys-184–Cys-197, Cys-191–Cys-211, and Cys-213–Cys-225. The propeptide occupies Glu-232 to Ala-249. Positions Ser-252–Ser-298 constitute an EGF-like 4 domain. 3 cysteine pairs are disulfide-bonded: Cys-256/Cys-269, Cys-263/Cys-283, and Cys-285/Cys-297. A propeptide spanning residues Met-313–Glu-325 is cleaved from the precursor.

The protein resides in the secreted. Its subcellular location is the extracellular space. The protein localises to the extracellular matrix. In terms of biological role, the EGIP peptides are factors effective to extrude the archenteron toward outside of embryos. May have a role in the induction of gastrulation. The sequence is that of Exogastrula-inducing polypeptide from Heliocidaris crassispina (Sea urchin).